A 289-amino-acid chain; its full sequence is 4-diphosphocytidyl-2-C-methyl-D-erythritol kinase (289 aa).

The active site involves K10. 94–104 (PVAAGLAGGSS) provides a ligand contact to ATP. D136 is a catalytic residue.

Belongs to the GHMP kinase family. IspE subfamily.

It carries out the reaction 4-CDP-2-C-methyl-D-erythritol + ATP = 4-CDP-2-C-methyl-D-erythritol 2-phosphate + ADP + H(+). It participates in isoprenoid biosynthesis; isopentenyl diphosphate biosynthesis via DXP pathway; isopentenyl diphosphate from 1-deoxy-D-xylulose 5-phosphate: step 3/6. In terms of biological role, catalyzes the phosphorylation of the position 2 hydroxy group of 4-diphosphocytidyl-2C-methyl-D-erythritol. This is 4-diphosphocytidyl-2-C-methyl-D-erythritol kinase from Bacillus mycoides (strain KBAB4) (Bacillus weihenstephanensis).